A 381-amino-acid polypeptide reads, in one-letter code: Molybdenum import ATP-binding protein ModC (381 aa).

One can recognise an ABC transporter domain in the interval 5-238 (SRSIQAQFRG…PALPLAASRD (234 aa)). 37-44 (GPSGCGKS) is a binding site for ATP. The Mop domain occupies 297-367 (NTSILNVLPA…VKGVALAPGR (71 aa)).

It belongs to the ABC transporter superfamily. Molybdate importer (TC 3.A.1.8) family. The complex is composed of two ATP-binding proteins (ModC), two transmembrane proteins (ModB) and a solute-binding protein (ModA).

It localises to the cell inner membrane. It carries out the reaction molybdate(out) + ATP + H2O = molybdate(in) + ADP + phosphate + H(+). Functionally, part of the ABC transporter complex ModABC involved in molybdenum import. Responsible for energy coupling to the transport system. This is Molybdenum import ATP-binding protein ModC from Rhodopseudomonas palustris (strain BisB18).